The sequence spans 341 residues: MGQKVNPHGFRLGITTEFSSRWYADRMYRDYVKEDVAIRRMMTRGMERAGISRVEIERTRDRVRVDIHTARPGIVIGRRGAEADRIRADLEKLTNKQVQLNILEVKNPEIDAQLVAQGVAEQLSQRVSFRRAMRKALQSALKAGAKGVRVQVAGRLGGAEMSRTEFYREGRVPLHTLRADIDYGFYEARTTFGRIGVKVWIYKGDVVAGRDHEAARVAARVQQRAVRGRSARREQPAAESPALETAAPAVAEPGAAAAPAAAGADVPVVADTAPAGQGAAERPVAEQPVVTAEPAAAAAVTGETGTGGSNAAPAEPTTSAAAEEAPGGADAPSDATETKEG.

Positions 38-106 constitute a KH type-2 domain; sequence IRRMMTRGME…QVQLNILEVK (69 aa). 2 disordered regions span residues 224-246 and 274-341; these read RAVRGRSARREQPAAESPALETA and PAGQ…TKEG. Low complexity-rich tracts occupy residues 285-303 and 311-333; these read AEQPVVTAEPAAAAAVTGE and AAPAEPTTSAAAEEAPGGADAPS.

This sequence belongs to the universal ribosomal protein uS3 family. As to quaternary structure, part of the 30S ribosomal subunit. Forms a tight complex with proteins S10 and S14.

Binds the lower part of the 30S subunit head. Binds mRNA in the 70S ribosome, positioning it for translation. The chain is Small ribosomal subunit protein uS3 from Acidothermus cellulolyticus (strain ATCC 43068 / DSM 8971 / 11B).